A 198-amino-acid polypeptide reads, in one-letter code: Probable GTP-binding protein EngB (198 aa).

Positions 22-195 constitute an EngB-type G domain; the sequence is DLPEIALAGR…WKAIHKFTKT (174 aa). GTP contacts are provided by residues 30–37, 57–61, 75–78, 142–145, and 174–176; these read GRSNVGKS, GKTQT, DVPG, TKAD, and FSS. S37 and T59 together coordinate Mg(2+).

This sequence belongs to the TRAFAC class TrmE-Era-EngA-EngB-Septin-like GTPase superfamily. EngB GTPase family. The cofactor is Mg(2+).

Functionally, necessary for normal cell division and for the maintenance of normal septation. The sequence is that of Probable GTP-binding protein EngB from Bacillus cereus (strain B4264).